The following is a 252-amino-acid chain: uncharacterized protein (252 aa).

It belongs to the methyltransferase superfamily.

This is an uncharacterized protein from Mycobacterium sp. (strain KMS).